The following is a 459-amino-acid chain: Cysteine--tRNA ligase (459 aa).

Zn(2+) is bound at residue Cys-28. Residues 30-40 carry the 'HIGH' region motif; sequence VTVYDLCHFGH. Zn(2+)-binding residues include Cys-209, His-234, and Glu-238. Residues 266–270 carry the 'KMSKS' region motif; the sequence is KMSKS. Lys-269 provides a ligand contact to ATP.

This sequence belongs to the class-I aminoacyl-tRNA synthetase family. In terms of assembly, monomer. It depends on Zn(2+) as a cofactor.

Its subcellular location is the cytoplasm. It carries out the reaction tRNA(Cys) + L-cysteine + ATP = L-cysteinyl-tRNA(Cys) + AMP + diphosphate. The chain is Cysteine--tRNA ligase from Glaesserella parasuis serovar 5 (strain SH0165) (Haemophilus parasuis).